A 535-amino-acid chain; its full sequence is Ribonuclease Y 2 (535 aa).

A helical transmembrane segment spans residues 1–21 (MLITGLIIGCLLIGLVIGYVV). The KH domain occupies 207–268 (LEHTVTVPNG…IRREVARVAL (62 aa)). One can recognise an HD domain in the interval 334–427 (VLLHSIEVAQ…VAAADAISGA (94 aa)).

The protein belongs to the RNase Y family.

It localises to the cell membrane. In terms of biological role, endoribonuclease that initiates mRNA decay. The protein is Ribonuclease Y 2 of Levilactobacillus brevis (strain ATCC 367 / BCRC 12310 / CIP 105137 / JCM 1170 / LMG 11437 / NCIMB 947 / NCTC 947) (Lactobacillus brevis).